The following is a 43-amino-acid chain: Defensin, isoforms B and C (43 aa).

Intrachain disulfides connect cysteine 3–cysteine 34, cysteine 20–cysteine 40, and cysteine 24–cysteine 42.

This sequence belongs to the invertebrate defensin family. Type 1 subfamily.

It localises to the secreted. Functionally, involved in anti Gram-positive activity of immune hemolymph of Z.atratus. This is Defensin, isoforms B and C from Zophobas atratus (Giant mealworm beetle).